The primary structure comprises 629 residues: tRNA uridine 5-carboxymethylaminomethyl modification enzyme MnmG (629 aa).

FAD-binding positions include 13–18 (GGGHAG), valine 125, and serine 180. NAD(+) is bound at residue 273–287 (GPRYCPSIEDKVMRF). Residue glutamine 370 coordinates FAD.

This sequence belongs to the MnmG family. As to quaternary structure, homodimer. Heterotetramer of two MnmE and two MnmG subunits. It depends on FAD as a cofactor.

It is found in the cytoplasm. In terms of biological role, NAD-binding protein involved in the addition of a carboxymethylaminomethyl (cmnm) group at the wobble position (U34) of certain tRNAs, forming tRNA-cmnm(5)s(2)U34. The sequence is that of tRNA uridine 5-carboxymethylaminomethyl modification enzyme MnmG from Escherichia coli (strain SMS-3-5 / SECEC).